The following is a 572-amino-acid chain: Phosphoenolpyruvate-protein phosphotransferase (572 aa).

H190 (tele-phosphohistidine intermediate) is an active-site residue. Residues R297 and R333 each contribute to the phosphoenolpyruvate site. E432 and D456 together coordinate Mg(2+). Residues 455 to 456 (ND) and R466 each bind phosphoenolpyruvate. C503 (proton donor) is an active-site residue.

Belongs to the PEP-utilizing enzyme family. Homodimer. It depends on Mg(2+) as a cofactor.

It localises to the cytoplasm. It catalyses the reaction L-histidyl-[protein] + phosphoenolpyruvate = N(pros)-phospho-L-histidyl-[protein] + pyruvate. Functionally, general (non sugar-specific) component of the phosphoenolpyruvate-dependent sugar phosphotransferase system (sugar PTS). This major carbohydrate active-transport system catalyzes the phosphorylation of incoming sugar substrates concomitantly with their translocation across the cell membrane. Enzyme I transfers the phosphoryl group from phosphoenolpyruvate (PEP) to the phosphoryl carrier protein (HPr). The polypeptide is Phosphoenolpyruvate-protein phosphotransferase (ptsI) (Listeria innocua serovar 6a (strain ATCC BAA-680 / CLIP 11262)).